A 262-amino-acid polypeptide reads, in one-letter code: 3-methyl-2-oxobutanoate hydroxymethyltransferase (262 aa).

Mg(2+) is bound by residues Asp42 and Asp81. 3-methyl-2-oxobutanoate-binding positions include 42-43 (DS), Asp81, and Lys110. Glu112 is a binding site for Mg(2+). Glu180 acts as the Proton acceptor in catalysis.

This sequence belongs to the PanB family. As to quaternary structure, homodecamer; pentamer of dimers. Requires Mg(2+) as cofactor.

It is found in the cytoplasm. The enzyme catalyses 3-methyl-2-oxobutanoate + (6R)-5,10-methylene-5,6,7,8-tetrahydrofolate + H2O = 2-dehydropantoate + (6S)-5,6,7,8-tetrahydrofolate. It functions in the pathway cofactor biosynthesis; (R)-pantothenate biosynthesis; (R)-pantoate from 3-methyl-2-oxobutanoate: step 1/2. In terms of biological role, catalyzes the reversible reaction in which hydroxymethyl group from 5,10-methylenetetrahydrofolate is transferred onto alpha-ketoisovalerate to form ketopantoate. In Legionella pneumophila (strain Corby), this protein is 3-methyl-2-oxobutanoate hydroxymethyltransferase.